Here is a 444-residue protein sequence, read N- to C-terminus: Phosphoglucosamine mutase (444 aa).

Ser102 acts as the Phosphoserine intermediate in catalysis. Residues Ser102, Asp241, Asp243, and Asp245 each coordinate Mg(2+). Phosphoserine is present on Ser102.

It belongs to the phosphohexose mutase family. Mg(2+) is required as a cofactor. Post-translationally, activated by phosphorylation.

The enzyme catalyses alpha-D-glucosamine 1-phosphate = D-glucosamine 6-phosphate. Functionally, catalyzes the conversion of glucosamine-6-phosphate to glucosamine-1-phosphate. In Glaesserella parasuis serovar 5 (strain SH0165) (Haemophilus parasuis), this protein is Phosphoglucosamine mutase.